A 426-amino-acid polypeptide reads, in one-letter code: High affinity 3',5'-cyclic-AMP phosphodiesterase 7A (426 aa).

The region spanning 80–402 is the PDEase domain; it reads LDEDYNGQAK…ASWKGLQRQQ (323 aa). Residue H156 is the Proton donor of the active site. Residues H160, H196, D197, and D306 each coordinate a divalent metal cation.

It belongs to the cyclic nucleotide phosphodiesterase family. PDE7 subfamily. In terms of assembly, interacts with CBFA2T3. The cofactor is a divalent metal cation.

The protein localises to the cytoplasm. It is found in the cytosol. It carries out the reaction 3',5'-cyclic AMP + H2O = AMP + H(+). Its pathway is purine metabolism; 3',5'-cyclic AMP degradation; AMP from 3',5'-cyclic AMP: step 1/1. Functionally, hydrolyzes the second messenger cAMP, which is a key regulator of many important physiological processes. May have a role in muscle signal transduction. This is High affinity 3',5'-cyclic-AMP phosphodiesterase 7A (Pde7a) from Rattus norvegicus (Rat).